The following is a 261-amino-acid chain: MSRRYDSRTTIFSPEGRLYQVEYAMEAIGHAGTCLGILANDGVLLAAERRNIHKLLDEVFFSEKIYKLNEDMACSVAGITSDANVLTNELRLIAQRYLLQYQEPIPCEQLVTALCDIKQAYTQFGGKRPFGVSLLYIGWDKHYGFQLYQSDPSGNYGGWKATCIGNNSAAAVSMLKQDYKEGEMTLKSALALAVKVLNKTMDVSKLSAEKVEIATLTRENGKTVIRVLKQKEVEQLIKKHEEEEAKAEREKKEKEQREKDK.

A phosphoserine mark is found at Ser-13 and Ser-75. Lys-127 is subject to N6-acetyllysine. Ser-173 is subject to Phosphoserine. Lys-176 carries the post-translational modification N6-acetyllysine. A disordered region spans residues 240–261 (HEEEEAKAEREKKEKEQREKDK).

Belongs to the peptidase T1A family. In terms of assembly, the 26S proteasome consists of a 20S proteasome core and two 19S regulatory subunits. The 20S proteasome core is a barrel-shaped complex made of 28 subunits that are arranged in four stacked rings. The two outer rings are each formed by seven alpha subunits, and the two inner rings are formed by seven beta subunits. The proteolytic activity is exerted by three beta-subunits PSMB5, PSMB6 and PSMB7. In terms of tissue distribution, ubiquitous.

The protein resides in the cytoplasm. It is found in the nucleus. Its function is as follows. Component of the 20S core proteasome complex involved in the proteolytic degradation of most intracellular proteins. This complex plays numerous essential roles within the cell by associating with different regulatory particles. Associated with two 19S regulatory particles, forms the 26S proteasome and thus participates in the ATP-dependent degradation of ubiquitinated proteins. The 26S proteasome plays a key role in the maintenance of protein homeostasis by removing misfolded or damaged proteins that could impair cellular functions, and by removing proteins whose functions are no longer required. Associated with the PA200 or PA28, the 20S proteasome mediates ubiquitin-independent protein degradation. This type of proteolysis is required in several pathways including spermatogenesis (20S-PA200 complex) or generation of a subset of MHC class I-presented antigenic peptides (20S-PA28 complex). The polypeptide is Proteasome subunit alpha type-4 (Psma4) (Rattus norvegicus (Rat)).